The following is a 960-amino-acid chain: Gamma-aminobutyric acid type B receptor subunit 1 (960 aa).

The signal sequence occupies residues 1 to 19; it reads MLLLLLVPLFLRPLGAGGA. Residues 20–590 lie on the Extracellular side of the membrane; it reads QTPNATSEGC…KTFRFLSQKL (571 aa). N-linked (GlcNAc...) asparagine glycosylation is found at Asn23 and Asn83. 2 consecutive Sushi domains span residues 29 to 95 and 97 to 158; these read CQII…PSRC and RICS…HCQV. Cystine bridges form between Cys99–Cys144, Cys130–Cys156, and Cys219–Cys245. 4-aminobutanoate contacts are provided by Ser246, Ser269, His286, and Tyr366. A disulfide bridge connects residues Cys375 and Cys409. 2 N-linked (GlcNAc...) asparagine glycosylation sites follow: Asn408 and Asn439. A 4-aminobutanoate-binding site is contributed by Glu465. N-linked (GlcNAc...) asparagine glycans are attached at residues Asn481, Asn501, and Asn513. Residues 591-611 traverse the membrane as a helical segment; the sequence is FISVSVLSSLGIVLAVVCLSF. Topologically, residues 612 to 630 are cytoplasmic; it reads NIYNSHVRYIQNSQPNLNN. The helical transmembrane segment at 631 to 651 threads the bilayer; sequence LTAVGCSLALAAVFPLGLDGY. Residues 652–666 are Extracellular-facing; it reads HIGRSQFPFVCQARL. Residues 667–687 form a helical membrane-spanning segment; that stretch reads WLLGLGFSLGYGSMFTKIWWV. Topologically, residues 688–709 are cytoplasmic; sequence HTVFTKKEEKKEWRKTLEPWKL. A helical transmembrane segment spans residues 710–730; it reads YATVGLLVGMDVLTLAIWQIV. The Extracellular portion of the chain corresponds to 731–767; the sequence is DPLHRTIETFAKEEPKEDIDVSILPQLEHCSSKKMNT. A helical membrane pass occupies residues 768–788; the sequence is WLGIFYGYKGLLLLLGIFLAY. At 789–803 the chain is on the cytoplasmic side; that stretch reads ETKSVSTEKINDHRA. A helical transmembrane segment spans residues 804-824; it reads VGMAIYNVAVLCLITAPVTMI. Residues 825–832 lie on the Extracellular side of the membrane; that stretch reads LSSQQDAA. Residues 833-853 form a helical membrane-spanning segment; sequence FAFASLAIVFSSYITLVVLFV. Residues 854–960 lie on the Cytoplasmic side of the membrane; it reads PKMRRLITRG…DGSRVHLLYK (107 aa). A compositionally biased stretch (polar residues) spans 866 to 879; the sequence is QSETQDTMKTGSST. 2 disordered regions span residues 866 to 891 and 908 to 960; these read QSET…RLLE and VSEL…LLYK. The stretch at 870–924 forms a coiled coil; the sequence is QDTMKTGSSTNNNEEEKSRLLEKENRELEKIIAEKEERVSELRHQLQSRQQLRSR. Thr872 carries the phosphothreonine modification. The tract at residues 887-915 is interaction with ATF4; that stretch reads SRLLEKENRELEKIIAEKEERVSELRHQL. Phosphothreonine is present on Thr929.

The protein belongs to the G-protein coupled receptor 3 family. GABA-B receptor subfamily. Heterodimer of GABBR1 and GABBR2. Homodimers may form, but are inactive. Interacts (via C-terminus) with ATF4 (via leucine zipper domain). Interacts with JAKMIP1. Ubiquitously expressed in tissues including the forebrain, cerebellum, eye, atrium, ventricle, lung, stomach, small intestine, colon, liver, spleen, kidney, urinary bladder and skeletal muscle. Expressed at low levels in testis, and more highly in brain regions. Expression is high the brain regions including cerebral cortical layers, with higher expression in VIb than in the II-V layers, pyramidal CA1-CA3 cell layers and granular cell layers of the hippocampus, granular cell layers of the dentate gyrus, including the caudate, putamen, nucleus accumbens and olfactory tubercle, the granular layer cell layers of the medial habenula, in the cerebellum, predominantly in Purkinje cells, and in the granule cell layer. Also expressed in areas of the brain including the medial geniculate nucleus, substantia nigra, pars compacta, the ventral tegmental area, and in several thalamic, amygdaloid and hypothalamic nuclei, such as the arcuate nucleus of the hypothalamus and mammilary bodies of the hypothalamus. Expressed in the amacrine cell of the retina. In terms of tissue distribution, expressed in the brain, spinal cord, stomach, testis, adrenal gland, pituitary, spleen and prostate. As to expression, expressed in the brain, spinal cord, stomach, testis, kidney and liver. Ubiquitously expressed. In terms of tissue distribution, expressed in the forebrain, cerebellum, eye, kidney and urinary bladder. As to expression, ubiquitously expressed with high expression in the pyramidal CA1-CA3 cell layers of the hippocampus, the granule cell layers of the dentate gyrus and olfactory tubercle, the whole cortex, and Purkinje cells of the cerebellum. Moderate expression in the granule cell layer of the cerebellum.

It localises to the cell membrane. The protein localises to the postsynaptic cell membrane. Its subcellular location is the cell projection. The protein resides in the dendrite. It is found in the perikaryon. Functionally, component of a heterodimeric G-protein coupled receptor for GABA, formed by GABBR1 and GABBR2. Within the heterodimeric GABA receptor, only GABBR1 seems to bind agonists, while GABBR2 mediates coupling to G proteins. Ligand binding causes a conformation change that triggers signaling via guanine nucleotide-binding proteins (G proteins) and modulates the activity of down-stream effectors, such as adenylate cyclase. Signaling inhibits adenylate cyclase, stimulates phospholipase A2, activates potassium channels, inactivates voltage-dependent calcium-channels and modulates inositol phospholipid hydrolysis. Calcium is required for high affinity binding to GABA. Plays a critical role in the fine-tuning of inhibitory synaptic transmission. Pre-synaptic GABA receptor inhibits neurotransmitter release by down-regulating high-voltage activated calcium channels, whereas postsynaptic GABA receptor decreases neuronal excitability by activating a prominent inwardly rectifying potassium (Kir) conductance that underlies the late inhibitory postsynaptic potentials. Not only implicated in synaptic inhibition but also in hippocampal long-term potentiation, slow wave sleep, muscle relaxation and antinociception. This is Gamma-aminobutyric acid type B receptor subunit 1 (Gabbr1) from Rattus norvegicus (Rat).